The primary structure comprises 190 residues: Transcription factor bHLH162 (190 aa).

Residues Met1–Arg12 are compositionally biased toward polar residues. Residues Met1–Lys21 are disordered. The bHLH domain occupies Ser11 to Leu63.

The protein belongs to the bHLH protein family.

It localises to the nucleus. This chain is Transcription factor bHLH162, found in Arabidopsis thaliana (Mouse-ear cress).